The following is a 408-amino-acid chain: Acetate kinase (408 aa).

Asn-7 is a Mg(2+) binding site. Residue Lys-14 coordinates ATP. Arg-91 contacts substrate. The active-site Proton donor/acceptor is Asp-148. ATP is bound by residues 208-212 (HLGNG), 283-285 (DFR), and 331-335 (GIGEN). Glu-384 provides a ligand contact to Mg(2+).

It belongs to the acetokinase family. In terms of assembly, homodimer. Mg(2+) is required as a cofactor. Requires Mn(2+) as cofactor.

The protein resides in the cytoplasm. The catalysed reaction is acetate + ATP = acetyl phosphate + ADP. Its pathway is metabolic intermediate biosynthesis; acetyl-CoA biosynthesis; acetyl-CoA from acetate: step 1/2. Catalyzes the formation of acetyl phosphate from acetate and ATP. Can also catalyze the reverse reaction. The sequence is that of Acetate kinase from Methanosarcina barkeri (strain Fusaro / DSM 804).